A 381-amino-acid polypeptide reads, in one-letter code: uncharacterized protein (381 aa).

The helical transmembrane segment at 3–23 threads the bilayer; that stretch reads GAVAGLVFLAVLVIFAIIVVA.

Belongs to the band 7/mec-2 family.

It is found in the membrane. This is an uncharacterized protein from Mycobacterium bovis (strain ATCC BAA-935 / AF2122/97).